An 836-amino-acid polypeptide reads, in one-letter code: DNA gyrase subunit A (836 aa).

A Topo IIA-type catalytic domain is found at 46-510; sequence LPDARDGLKP…ISEEIDDESL (465 aa). The active-site O-(5'-phospho-DNA)-tyrosine intermediate is the tyrosine 134. The GyrA-box signature appears at 537-543; sequence QHRGGVG.

Belongs to the type II topoisomerase GyrA/ParC subunit family. In terms of assembly, heterotetramer, composed of two GyrA and two GyrB chains. In the heterotetramer, GyrA contains the active site tyrosine that forms a transient covalent intermediate with DNA, while GyrB binds cofactors and catalyzes ATP hydrolysis.

Its subcellular location is the cytoplasm. The enzyme catalyses ATP-dependent breakage, passage and rejoining of double-stranded DNA.. Functionally, a type II topoisomerase that negatively supercoils closed circular double-stranded (ds) DNA in an ATP-dependent manner to modulate DNA topology and maintain chromosomes in an underwound state. Negative supercoiling favors strand separation, and DNA replication, transcription, recombination and repair, all of which involve strand separation. Also able to catalyze the interconversion of other topological isomers of dsDNA rings, including catenanes and knotted rings. Type II topoisomerases break and join 2 DNA strands simultaneously in an ATP-dependent manner. The sequence is that of DNA gyrase subunit A from Mycoplasma genitalium (strain ATCC 33530 / DSM 19775 / NCTC 10195 / G37) (Mycoplasmoides genitalium).